Consider the following 132-residue polypeptide: Tumor suppressor ARF (132 aa).

The interval 1 to 64 (MVRRFLVTLR…LGQQPLPRRP (64 aa)) is interaction with CDK5RAP3 and MDM2. Positions 56-132 (GQQPLPRRPG…CLGPSARGPG (77 aa)) are disordered. Residues 71–83 (RPSGGAAAAPRRG) are compositionally biased toward low complexity. The span at 84–99 (AQLRRPRHSHPTRARR) shows a compositional bias: basic residues. Residues 103-117 (GLPGHAGGAAPGRGA) show a composition bias toward gly residues.

As to quaternary structure, does not interact with cyclins, CDK1, CDK2, CDK4, CDK5 or CDK6. Binds to BCL6, E2F1, HUWE1, MDM2, MYC, NPM1/B23, TOP1/TOPOI and UBE2I/UBC9. Interacts with TBRG1 and COMMD1. Interacts with CDKN2AIP and E4F1. Interacts with CDK5RAP3 and MDM2; form a ternary complex involved in regulation of p53/TP53. Interacts with NOP53; the interaction is direct and promotes ARF nucleoplasmic relocalization and ubiquitin-mediated proteasomal degradation. Interacts with TTF1 (via the N-terminal region (NRD) and a C-terminal region); the interaction is direct and inhibits the nucleolar localization of TTF1. In terms of assembly, interacts with C1QBP. Post-translationally, ubiquitinated in normal cells by TRIP12 via the ubiquitin fusion degradation (UFD) pathway, a process that mediates ubiquitination at the N-terminus, regardless of the absence of lysine residues. Ubiquitination leads to its proteasomal degradation. In cancer cells, however, TRIP12 is located in a different cell compartment, preventing ubiquitination and degradation.

The protein localises to the nucleus. It is found in the nucleolus. The protein resides in the nucleoplasm. It localises to the mitochondrion. Functionally, capable of inducing cell cycle arrest in G1 and G2 phases. Acts as a tumor suppressor. Binds to MDM2 and blocks its nucleocytoplasmic shuttling by sequestering it in the nucleolus. This inhibits the oncogenic action of MDM2 by blocking MDM2-induced degradation of p53 and enhancing p53-dependent transactivation and apoptosis. Also induces G2 arrest and apoptosis in a p53-independent manner by preventing the activation of cyclin B1/CDC2 complexes. Binds to BCL6 and down-regulates BCL6-induced transcriptional repression. Binds to E2F1 and MYC and blocks their transcriptional activator activity but has no effect on MYC transcriptional repression. Binds to TOP1/TOPOI and stimulates its activity. This complex binds to rRNA gene promoters and may play a role in rRNA transcription and/or maturation. Interacts with NPM1/B23 and promotes its polyubiquitination and degradation, thus inhibiting rRNA processing. Plays a role in inhibiting ribosome biogenesis, perhaps by binding to the nucleolar localization sequence of transcription termination factor TTF1, and thereby preventing nucleolar localization of TTF1. Interacts with COMMD1 and promotes its 'Lys63'-linked polyubiquitination. Interacts with UBE2I/UBC9 and enhances sumoylation of a number of its binding partners including MDM2 and E2F1. Binds to HUWE1 and represses its ubiquitin ligase activity. May play a role in controlling cell proliferation and apoptosis during mammary gland development. In terms of biological role, may be involved in regulation of autophagy and caspase-independent cell death; the short-lived mitochondrial isoform is stabilized by C1QBP. The polypeptide is Tumor suppressor ARF (Homo sapiens (Human)).